The primary structure comprises 239 residues: Lactate utilization protein A (239 aa).

The protein belongs to the LutA/YkgE family.

Is involved in L-lactate degradation and allows cells to grow with lactate as the sole carbon source. This Geobacillus kaustophilus (strain HTA426) protein is Lactate utilization protein A.